Reading from the N-terminus, the 60-residue chain is Small, acid-soluble spore protein 1 (60 aa).

The protein belongs to the alpha/beta-type SASP family. SASP are degraded in the first minutes of spore germination and provide amino acids for both new protein synthesis and metabolism.

Its function is as follows. SASP are bound to spore DNA. They are double-stranded DNA-binding proteins that cause DNA to change to an a-like conformation. They protect the DNA backbone from chemical and enzymatic cleavage and are thus involved in dormant spore's high resistance to UV light. The sequence is that of Small, acid-soluble spore protein 1 (ssp1) from Clostridium perfringens (strain 13 / Type A).